The sequence spans 995 residues: uncharacterized protein (995 aa).

Positions 1–30 (MFIHRMKSNLASLFLSFFLLLACEFTFSYA) are cleaved as a signal peptide. Residues Asn-115, Asn-162, Asn-225, Asn-422, Asn-478, and Asn-486 are each glycosylated (N-linked (GlcNAc...) asparagine). Residue Glu-502 is part of the active site. 2 N-linked (GlcNAc...) asparagine glycosylation sites follow: Asn-546 and Asn-611. The active-site Proton donor is the Asp-669. Asn-670, Asn-823, Asn-843, and Asn-986 each carry an N-linked (GlcNAc...) asparagine glycan.

This sequence belongs to the glycosyl hydrolase 31 family.

It is found in the spore wall. This is an uncharacterized protein from Schizosaccharomyces pombe (strain 972 / ATCC 24843) (Fission yeast).